Consider the following 430-residue polypeptide: Histidine--tRNA ligase (430 aa).

The protein belongs to the class-II aminoacyl-tRNA synthetase family. As to quaternary structure, homodimer.

It localises to the cytoplasm. The enzyme catalyses tRNA(His) + L-histidine + ATP = L-histidyl-tRNA(His) + AMP + diphosphate + H(+). The polypeptide is Histidine--tRNA ligase (Acinetobacter baumannii (strain AB307-0294)).